We begin with the raw amino-acid sequence, 116 residues long: T cell receptor alpha variable 38-1 (116 aa).

Positions 1–21 (MTRVSLLWAVVVSTCLESGMA) are cleaved as a signal peptide. Residues 22–116 (QTVTQSQPEM…TAMYFCAFMK (95 aa)) form the Ig-like domain. A disulfide bond links Cys43 and Cys112. Asn78 carries N-linked (GlcNAc...) asparagine glycosylation.

As to quaternary structure, alpha-beta TR is a heterodimer composed of an alpha and beta chain; disulfide-linked. The alpha-beta TR is associated with the transmembrane signaling CD3 coreceptor proteins to form the TR-CD3 (TcR or TCR). The assembly of alpha-beta TR heterodimers with CD3 occurs in the endoplasmic reticulum where a single alpha-beta TR heterodimer associates with one CD3D-CD3E heterodimer, one CD3G-CD3E heterodimer and one CD247 homodimer forming a stable octameric structure. CD3D-CD3E and CD3G-CD3E heterodimers preferentially associate with TR alpha and TR beta chains, respectively. The association of the CD247 homodimer is the last step of TcR assembly in the endoplasmic reticulum and is required for transport to the cell surface.

Its subcellular location is the cell membrane. V region of the variable domain of T cell receptor (TR) alpha chain that participates in the antigen recognition. Alpha-beta T cell receptors are antigen specific receptors which are essential to the immune response and are present on the cell surface of T lymphocytes. Recognize peptide-major histocompatibility (MH) (pMH) complexes that are displayed by antigen presenting cells (APC), a prerequisite for efficient T cell adaptive immunity against pathogens. Binding of alpha-beta TR to pMH complex initiates TR-CD3 clustering on the cell surface and intracellular activation of LCK that phosphorylates the ITAM motifs of CD3G, CD3D, CD3E and CD247 enabling the recruitment of ZAP70. In turn ZAP70 phosphorylates LAT, which recruits numerous signaling molecules to form the LAT signalosome. The LAT signalosome propagates signal branching to three major signaling pathways, the calcium, the mitogen-activated protein kinase (MAPK) kinase and the nuclear factor NF-kappa-B (NF-kB) pathways, leading to the mobilization of transcription factors that are critical for gene expression and essential for T cell growth and differentiation. The T cell repertoire is generated in the thymus, by V-(D)-J rearrangement. This repertoire is then shaped by intrathymic selection events to generate a peripheral T cell pool of self-MH restricted, non-autoaggressive T cells. Post-thymic interaction of alpha-beta TR with the pMH complexes shapes TR structural and functional avidity. The protein is T cell receptor alpha variable 38-1 of Homo sapiens (Human).